A 366-amino-acid polypeptide reads, in one-letter code: DNA-directed RNA polymerase subunit alpha (366 aa).

Residues 1–233 are alpha N-terminal domain (alpha-NTD); it reads MVREKVRVST…DLFLPFLHAE (233 aa). The interval 264–366 is alpha C-terminal domain (alpha-CTD); the sequence is KNEIALKSIF…KDEMGFESLE (103 aa).

The protein belongs to the RNA polymerase alpha chain family. As to quaternary structure, in plastids the minimal PEP RNA polymerase catalytic core is composed of four subunits: alpha, beta, beta', and beta''. When a (nuclear-encoded) sigma factor is associated with the core the holoenzyme is formed, which can initiate transcription.

The protein resides in the plastid. Its subcellular location is the chloroplast. The enzyme catalyses RNA(n) + a ribonucleoside 5'-triphosphate = RNA(n+1) + diphosphate. Its function is as follows. DNA-dependent RNA polymerase catalyzes the transcription of DNA into RNA using the four ribonucleoside triphosphates as substrates. The chain is DNA-directed RNA polymerase subunit alpha from Oenothera elata subsp. hookeri (Hooker's evening primrose).